The sequence spans 800 residues: Isoamylase 2, chloroplastic (800 aa).

A compositionally biased stretch (pro residues) spans 1 to 10 (MASLPAPPTP). Positions 1–22 (MASLPAPPTPLGSCPRGRGGGR) are disordered. The transit peptide at 1–34 (MASLPAPPTPLGSCPRGRGGGRVVARPRRAGLAC) directs the protein to the chloroplast.

It belongs to the glycosyl hydrolase 13 family. As to quaternary structure, forms a hetero-hexamer composed of five ISA1 and one ISA2. As to expression, highly expressed in developing endosperm and leaves.

It is found in the plastid. Its subcellular location is the chloroplast. The enzyme catalyses Hydrolysis of (1-&gt;6)-alpha-D-glucosidic branch linkages in glycogen, amylopectin and their beta-limit dextrins.. Its function is as follows. Starch-debranching enzyme involved in amylopectin biosynthesis in endosperm. Functions by removing excess branches or improper branches that interfere with the formation of double helices of the cluster chains of amylopectin and crystallization of starch. Works together with ISA1 as heterooligomer. The heterooligomer ISA1 and ISA2 possesses higher affinity than the ISA1 homooligomer for various branched polyglucans in vitro, but no marked differences exist in chain preferences for debranching of amylopectin and phytoglycogen between these forms. In Oryza sativa subsp. japonica (Rice), this protein is Isoamylase 2, chloroplastic.